Reading from the N-terminus, the 369-residue chain is MSRPPRPTSSSRSNCSGGVFDWEPALRKLDELNARVEDPTLWNDPDEAQAVSRERSRLSAQVEAVHGLERDLADALGYAELADEEGDEASLDEARAQLREIKERAARAELEALLSGEADGNDAYVEINSGAGGTESNDWAGMLLRMYTRWAQAHGMSVDVIEETAGEQAGIKSVTLQVKGTNAYGWLKTEAGVHRLVRISPYDSSARRHTSFASVWVYPVIDDNIEIEINPADVRTDTYRASGAGGQHVNKTDSAVRLTHIPTGIAVACQTQRSQHQNRDQAWKMLRARLYELELEKREAAQQALEDQKTDIGWGHQIRSYVLQPYQMVKDLRTEVETSDTQGVLDGDLDAFMGAALAQRVGATRDAAA.

Gln247 is modified (N5-methylglutamine).

The protein belongs to the prokaryotic/mitochondrial release factor family. Post-translationally, methylated by PrmC. Methylation increases the termination efficiency of RF2.

The protein resides in the cytoplasm. Its function is as follows. Peptide chain release factor 2 directs the termination of translation in response to the peptide chain termination codons UGA and UAA. In Phenylobacterium zucineum (strain HLK1), this protein is Peptide chain release factor 2.